A 488-amino-acid polypeptide reads, in one-letter code: Glutamyl-tRNA(Gln) amidotransferase subunit A (488 aa).

Residues Lys77 and Ser152 each act as charge relay system in the active site. Ser176 serves as the catalytic Acyl-ester intermediate.

The protein belongs to the amidase family. GatA subfamily. In terms of assembly, heterotrimer of A, B and C subunits.

It carries out the reaction L-glutamyl-tRNA(Gln) + L-glutamine + ATP + H2O = L-glutaminyl-tRNA(Gln) + L-glutamate + ADP + phosphate + H(+). In terms of biological role, allows the formation of correctly charged Gln-tRNA(Gln) through the transamidation of misacylated Glu-tRNA(Gln) in organisms which lack glutaminyl-tRNA synthetase. The reaction takes place in the presence of glutamine and ATP through an activated gamma-phospho-Glu-tRNA(Gln). The chain is Glutamyl-tRNA(Gln) amidotransferase subunit A from Streptococcus pyogenes serotype M4 (strain MGAS10750).